Consider the following 119-residue polypeptide: Protein MGF 110-11L (119 aa).

The first 17 residues, 1–17, serve as a signal peptide directing secretion; sequence MKVLLGLLLGYSVLILA.

It belongs to the asfivirus MGF 110 family.

This is Protein MGF 110-11L from Ornithodoros (relapsing fever ticks).